A 620-amino-acid chain; its full sequence is E3 ubiquitin-protein ligase AMFR (620 aa).

7 helical membrane-spanning segments follow: residues 75–95 (LFVWVMVNTACCILMLIGKVI), 115–135 (FWNFIFYKFIFIFGVLNVQRV), 138–158 (VVLWCLWFSMLIFLHLMVQLC), 179–199 (VLALLVSVLSCCGGLAVLCAL), 201–221 (GHIHGMHTVAFMAAECLLVTV), 247–267 (SSYIYYTDFIMELAILSLDLM), and 269–289 (HIHMLLFGNIWLSMASLVIFM). The segment at 334-372 (CAICWDSMTTARKLPCGHLFHNSCLRSWLEQDTSCPTCR) adopts an RING-type; atypical zinc-finger fold. The CUE domain occupies 449–491 (QLNGMAHQIQEMFPQVPYHLILQDLQLTRSVEVTTDNILEGRI). Residues 510 to 526 (ASEDGAGASSGSEVAAP) show a composition bias toward low complexity. Disordered regions lie at residues 510–544 (ASEDGAGASSGSEVAAPEAEDFEVRGSRFSKSADE) and 569–598 (PEDGDAYSVLGADNDDSVPSIEDEDSDSVT). The segment covering 531–544 (FEVRGSRFSKSADE) has biased composition (basic and acidic residues). The span at 581-595 (DNDDSVPSIEDEDSD) shows a compositional bias: acidic residues.

As to expression, widely expressed.

The protein resides in the endoplasmic reticulum membrane. It carries out the reaction [E2 ubiquitin-conjugating enzyme]-S-ubiquitinyl-L-cysteine + [acceptor protein]-L-cysteine = [E2 ubiquitin-conjugating enzyme]-L-cysteine + [acceptor protein]-S-ubiquitinyl-L-cysteine.. It participates in protein modification; protein ubiquitination. In terms of biological role, E3 ubiquitin-protein ligase that mediates the polyubiquitination of lysine and cysteine residues on target proteins. May participate in the final step of endoplasmic reticulum-associated degradation (ERAD). Required for proper lipid homeostasis. The polypeptide is E3 ubiquitin-protein ligase AMFR (Danio rerio (Zebrafish)).